We begin with the raw amino-acid sequence, 538 residues long: MGLLLLVLILTPSLAAYRHPDFPLLEKAQQLLQSTGSPYSTNCWLCTSSSTETPGTAYPASPREWTSIEAELHISYRWDPNLKGLMRPANSLLSTVKQDFPDIRQKPPIFGPIFTNINLMGIAPICVMAKRKNGTNVGTLPSTVCNVTFTVDSNQQTYQTYTHNQFRHQPRFPKPPNITFPQGTLLDKSSRFCQGRPSSCSTRNFWFRPADYNQCLQISNLSSTAEWVLLDQTRNSLFWENKTKGANQSQTPCVQVLAGMTIATSYLGISAVSEFFGTSLTPLFHFHISTCLKTQGAFYICGQSIHQCLPSNWTGTCTIGYVTPDIFIAPGNLSLPIPIYGNSPLPRVRRAIHFIPLLAGLGILAGTGTGIAGITKASLTYSQLSKEIANNIDTMAKALTTMQEQIDSLAAVVLQNRRGLDMLTAAQGGICLALDEKCCFWVNQSGKVQDNIRQLLNQASSLRERATQGWLNWEGTWKWFSWVLPLTGPLVSLLLLLLFGPCLLNLITQFVSSRLQAIKLQTNLSAGRHPRNIQESPF.

Residues Met1–Ala15 form the signal peptide. At Ala16 to Lys478 the chain is on the extracellular side. Residues Cys43–Cys46 carry the CXXC motif. Disulfide bonds link Cys43/Cys46, Cys43/Cys439, and Cys431/Cys438. Residues Asn133, Asn146, Asn177, Asn220, Asn241, Asn247, Asn312, and Asn332 are each glycosylated (N-linked (GlcNAc...) asparagine). Positions Phe354–Ile374 are fusion peptide. A CKS-17 motif is present at residues Leu414 to Ile430. The CX6CC motif lies at Cys431–Cys439. N-linked (GlcNAc...) asparagine glycosylation is present at Asn443. Residues Trp479–Phe499 form a helical membrane-spanning segment. The Cytoplasmic portion of the chain corresponds to Gly500–Phe538.

Belongs to the gamma type-C retroviral envelope protein family. HERV class-I FRD env subfamily. As to quaternary structure, the surface and transmembrane proteins form a heterodimer. They are attached by non-covalent interactions or by a labile interchain disulfide bond. Interacts with MFSD2A. Specific enzymatic cleavages in vivo yield the mature SU and TM proteins. In terms of processing, the CXXC motif is highly conserved across a broad range of retroviral envelope proteins. It is thought to participate in the formation of a labile disulfide bond possibly with the CX6CC motif present in the transmembrane protein. Isomerization of the intersubunit disulfide bond to an SU intrachain disulfide bond is thought to occur upon receptor recognition in order to allow membrane fusion. Expressed at higher level in placenta. Expressed at lower level in adrenal, bone marrow, brain, breast, colon, kidney, lung, ovary, peripheral blood lymphocytes, prostate, skin, spleen, testis, thymus, thyroid, trachea.

It localises to the virion. The protein resides in the cell membrane. In terms of biological role, this endogenous retroviral envelope protein has retained its original fusogenic properties and participates in trophoblast fusion and the formation of a syncytium during placenta morphogenesis. The interaction with MFSD2A is apparently important for this process. Functionally, endogenous envelope proteins may have kept, lost or modified their original function during evolution but this one can still make pseudotypes with MLV, HIV-1 or SIV-1 virions and confer infectivity. Retroviral envelope proteins mediate receptor recognition and membrane fusion during early infection. The surface protein mediates receptor recognition, while the transmembrane protein anchors the envelope heterodimer to the viral membrane through one transmembrane domain. The other hydrophobic domain, called fusion peptide, mediates fusion of the viral membrane with the target cell membrane. The chain is Syncytin-2 (ERVFRD-1) from Homo sapiens (Human).